Reading from the N-terminus, the 492-residue chain is Rab5 GDP/GTP exchange factor (492 aa).

Residues 1–74 (MSLKSERRGI…EEEAFASSQS (74 aa)) are interaction with ubiquitinated proteins. Residues 13–47 (DQSELLCKKGCGYYGNPAWQGFCSKCWREEYHKAR) form an A20-type zinc finger. Positions 19, 23, 35, and 38 each coordinate Zn(2+). Residues 66–85 (EEAFASSQSSQGAQSLTFSK) form a disordered region. Residues 69–84 (FASSQSSQGAQSLTFS) are compositionally biased toward low complexity. 2 positions are modified to phosphoserine: S125 and S133. Residues K152 and K171 each carry the N6-acetyllysine modification. Residues 233 to 376 (EKKDLAIQKR…IEKLDAQSLN (144 aa)) enclose the VPS9 domain. Phosphoserine occurs at positions 374, 378, 391, and 401. Residues 408 to 449 (VKQMYKNLDLLSQLNERQERIMNEAKKLEKDLIDWTDGIAKE) are a coiled coil. Residues 471 to 492 (IDSENVENDKLPPPLQPQVYAG) are disordered.

In terms of assembly, heterodimer with RABEP1. The heterodimer binds RAB4A and RAB5A that have been activated by GTP-binding. Binds TSC2, GGA1, GGA2, GGA3, AP1G1 and AP1G2. Interacts with RAB21, and with 100-fold lower affinity also with RAB22. Interacts with ubiquitinated EGFR. Interacts with RGS14; the interaction is GTP-dependent. In terms of processing, monoubiquitinated. In terms of tissue distribution, detected in brain.

The protein localises to the cytoplasm. It localises to the early endosome. Its subcellular location is the recycling endosome. In terms of biological role, rab effector protein acting as linker between gamma-adaptin and RAB5A. Involved in endocytic membrane fusion and membrane trafficking of recycling endosomes. Stimulates nucleotide exchange on RAB5A. Can act as a ubiquitin ligase. The protein is Rab5 GDP/GTP exchange factor (RABGEF1) of Bos taurus (Bovine).